Consider the following 412-residue polypeptide: MHKLFVARSVKSALFRIKNHQKPQFAAFSTSLLFDDTQKQFKESVAQFAQENIAPHAEKIDRTNYFPQDVNLWKLMGNFNLLGITVPEEYGGLGLGYLYHCIAMEEISRASGSVGLSYGAHTNLCINQLVRNGTHEQKQKYLPKLISGEHVGALAMSEPNAGSDVVSMKCKADRVEGGYVLNGNKMWCTNGPTAQTLVVYAKTDVTAGSKGITAFIIEKGMTGFSTAQKLDKLGMRGSDTCELVFENCFVPEENVLGQVGRGVYVLMSGLDLERLVLASGPVGIMQACLDVVLPYVKQREQFGRPIGEFQFVQGKVADMYTSMQSSRSYLYSVARECDSGTINTKDCAGVILSAAERATQVALQAIQCLGGNGYVNEYPTGRFLRDAKLYEIGAGTSEIRRMIIGRELFKEQ.

The N-terminal 25 residues, 1-25 (MHKLFVARSVKSALFRIKNHQKPQF), are a transit peptide targeting the mitochondrion. Residues 154-163 (LAMSEPNAGS) and 187-189 (WCT) each bind FAD. Ser-163 contributes to the substrate binding site. Residues 209–210 (SK), Tyr-264, and 271–274 (DLER) each bind substrate. The active-site Proton acceptor is Glu-273. Residues Arg-299, Gln-310, and 367 to 371 (QCLGG) contribute to the FAD site. 394 to 395 (AG) provides a ligand contact to substrate. 396–398 (TSE) lines the FAD pocket.

It belongs to the acyl-CoA dehydrogenase family. Homotetramer. It depends on FAD as a cofactor. Expressed in flowers and tubers.

The protein localises to the mitochondrion. The enzyme catalyses 3-methylbutanoyl-CoA + oxidized [electron-transfer flavoprotein] + H(+) = 3-methylbut-2-enoyl-CoA + reduced [electron-transfer flavoprotein]. The protein operates within amino-acid degradation; L-leucine degradation; (S)-3-hydroxy-3-methylglutaryl-CoA from 3-isovaleryl-CoA: step 1/3. Functionally, involved in the catabolism of amino acids. Uses isovaleryl-CoA as substrate. Minor activity detected with 2-methylpalmitoyl-CoA or 2-methylbutanoyl-CoA, but no activity with short- and medium-straight chain acyl-CoA esters or with 2-methylhexanoyl-CoA. The protein is Isovaleryl-CoA dehydrogenase, mitochondrial (IVD) of Solanum tuberosum (Potato).